Reading from the N-terminus, the 792-residue chain is Phenylalanine--tRNA ligase beta subunit (792 aa).

One can recognise a tRNA-binding domain in the interval 40-156 (FPRTENLIVG…AKLNDIDPLK (117 aa)). Positions 404–472 (LKDNLIDFDS…KKINVNNLEL (69 aa)) constitute a B5 domain. Mg(2+)-binding residues include Asp-450, Asp-456, Glu-459, and Glu-460.

Belongs to the phenylalanyl-tRNA synthetase beta subunit family. Type 1 subfamily. Tetramer of two alpha and two beta subunits. Requires Mg(2+) as cofactor.

It localises to the cytoplasm. The catalysed reaction is tRNA(Phe) + L-phenylalanine + ATP = L-phenylalanyl-tRNA(Phe) + AMP + diphosphate + H(+). This Malacoplasma penetrans (strain HF-2) (Mycoplasma penetrans) protein is Phenylalanine--tRNA ligase beta subunit.